A 269-amino-acid chain; its full sequence is Polyhedrin (269 aa).

Its function is as follows. Major component of the virus occlusion bodies, which are large proteinaceous structures (polyhedra), that protect the virus from the outside environment for extended periods until they are ingested by insect larvae. The polypeptide is Polyhedrin (Euxoa scandens cypovirus (EsCPV)).